Reading from the N-terminus, the 225-residue chain is Urease accessory protein UreE (225 aa).

Composition is skewed to basic and acidic residues over residues 189–202 (HSHD…EHEG) and 212–225 (NSHD…HSRR). Positions 189 to 225 (HSHDFMGHSHEHEGHRHVHNHAGNSHDNEHDEHHSRR) are disordered.

It belongs to the UreE family.

Its subcellular location is the cytoplasm. In terms of biological role, involved in urease metallocenter assembly. Binds nickel. Probably functions as a nickel donor during metallocenter assembly. The polypeptide is Urease accessory protein UreE (Edwardsiella ictaluri).